The primary structure comprises 523 residues: Frizzled-2 (523 aa).

The FZ domain maps to 1–120 (PDHGFCQPIS…HGAEQICVGQ (120 aa)). The Extracellular segment spans residues 1-205 (PDHGFCQPIS…EDEIRFARVW (205 aa)). Cystine bridges form between cysteine 6–cysteine 67, cysteine 14–cysteine 60, cysteine 51–cysteine 88, cysteine 77–cysteine 117, and cysteine 81–cysteine 105. Asparagine 20 carries an N-linked (GlcNAc...) asparagine glycan. The N-linked (GlcNAc...) asparagine glycan is linked to asparagine 121. The chain crosses the membrane as a helical span at residues 206–226 (ILVWSVLCCASTFFTVTTYLV). The Cytoplasmic segment spans residues 227-237 (DMQRFRYPERP). Residues 238-258 (IIFLSGCYTMVSVAYIAGFVL) form a helical membrane-spanning segment. Residues 259–285 (EERVVCNERFQEDGYRTVVQGTKKEGC) are Extracellular-facing. Residues 286–306 (TILFMMLYFFSMASSIWWVIL) form a helical membrane-spanning segment. Residues 307–328 (SLTWFLAAGMKWGHEAIEANSQ) lie on the Cytoplasmic side of the membrane. A helical transmembrane segment spans residues 329–349 (YFHLAAWAVPAVKTITILAMG). Over 350–372 (QIDGDLLSGVCFVGLNGIDPLRG) the chain is Extracellular. Residues 373–393 (FVLAPLFVYLFIGTSFLLAGF) traverse the membrane as a helical segment. Residues 394 to 419 (VSLFRIRTIMKHGGTKTEKLERLMVR) lie on the Cytoplasmic side of the membrane. The chain crosses the membrane as a helical span at residues 420–440 (IGVFSVLYTVPATIVIACYFY). Topologically, residues 441–477 (EQAFRQHWERSWISQHCKSLAIPCPLHFTPRMTPDFT) are extracellular. Residues 478-498 (VYMIKYLMTLIVGITSGFWIF) form a helical membrane-spanning segment. The Cytoplasmic segment spans residues 499–523 (SGKTLHSWRKFYTRLTNSRQGETTV). The short motif at 501 to 506 (KTLHSW) is the Lys-Thr-X-X-X-Trp motif, mediates interaction with the PDZ domain of Dvl family members element. A PDZ-binding motif is present at residues 521–523 (TTV).

Belongs to the G-protein coupled receptor Fz/Smo family. In terms of tissue distribution, expressed in the developing head and limbs. Expressed broadly in cranial ectoderm. Also expressed in the developing somites (dermomyotome) and in other cranial placodes, including the olfactory, lens, and otic placodes (rostral rim of the vesicle).

Its subcellular location is the membrane. It is found in the cell membrane. Functionally, receptor for Wnt proteins. Most of frizzled receptors are coupled to the beta-catenin canonical signaling pathway, which leads to the activation of disheveled proteins, inhibition of GSK-3 kinase, nuclear accumulation of beta-catenin and activation of Wnt target genes. A second signaling pathway involving PKC and calcium fluxes has been seen for some family members, but it is not yet clear if it represents a distinct pathway or if it can be integrated in the canonical pathway, as PKC seems to be required for Wnt-mediated inactivation of GSK-3 kinase. Both pathways seem to involve interactions with G-proteins. May be involved in transduction and intercellular transmission of polarity information during tissue morphogenesis and/or in differentiated tissues. The polypeptide is Frizzled-2 (FZD2) (Gallus gallus (Chicken)).